We begin with the raw amino-acid sequence, 361 residues long: NAD(P)H-quinone oxidoreductase subunit 1, chloroplastic (361 aa).

Transmembrane regions (helical) follow at residues 25–45, 102–122, 125–145, 246–266, 298–318, and 334–354; these read IWLL…VLVI, VAVV…HLVL, LSIG…GLLM, YSGI…LVSS, VFGT…FLFI, and LLNL…LLTT.

This sequence belongs to the complex I subunit 1 family. As to quaternary structure, NDH is composed of at least 16 different subunits, 5 of which are encoded in the nucleus.

The protein localises to the plastid. Its subcellular location is the chloroplast thylakoid membrane. The catalysed reaction is a plastoquinone + NADH + (n+1) H(+)(in) = a plastoquinol + NAD(+) + n H(+)(out). It catalyses the reaction a plastoquinone + NADPH + (n+1) H(+)(in) = a plastoquinol + NADP(+) + n H(+)(out). Its function is as follows. NDH shuttles electrons from NAD(P)H:plastoquinone, via FMN and iron-sulfur (Fe-S) centers, to quinones in the photosynthetic chain and possibly in a chloroplast respiratory chain. The immediate electron acceptor for the enzyme in this species is believed to be plastoquinone. Couples the redox reaction to proton translocation, and thus conserves the redox energy in a proton gradient. This chain is NAD(P)H-quinone oxidoreductase subunit 1, chloroplastic, found in Nymphaea alba (White water-lily).